Here is a 224-residue protein sequence, read N- to C-terminus: MTGGATGALPRTMKEGWIVYARSTTIQAQSECIDTGIAHVRDVVMPALQGMDGCIGVSLLVDRQSGRCIATSAWETAEAMHASREQVTPIRDRCAEMFGGTPAVEEWEIAAMHRDHRSAEGACVRATWVKVPADQVDQGIEYYKSSVLPQIEGLDGFCSASLLVDRTSGRAVSSATFDSFDAMERNRDQSNALKATSLREAGGEELDECEFELALAHLRVPELV.

To M.tuberculosis Rv2558.

This is an uncharacterized protein from Mycobacterium tuberculosis (strain CDC 1551 / Oshkosh).